A 156-amino-acid polypeptide reads, in one-letter code: ATP synthase subunit b (156 aa).

The chain crosses the membrane as a helical span at residues 11 to 31; the sequence is LIAFALFVWFCMKFVWPPIIN.

It belongs to the ATPase B chain family. As to quaternary structure, F-type ATPases have 2 components, F(1) - the catalytic core - and F(0) - the membrane proton channel. F(1) has five subunits: alpha(3), beta(3), gamma(1), delta(1), epsilon(1). F(0) has three main subunits: a(1), b(2) and c(10-14). The alpha and beta chains form an alternating ring which encloses part of the gamma chain. F(1) is attached to F(0) by a central stalk formed by the gamma and epsilon chains, while a peripheral stalk is formed by the delta and b chains.

The protein resides in the cell inner membrane. Functionally, f(1)F(0) ATP synthase produces ATP from ADP in the presence of a proton or sodium gradient. F-type ATPases consist of two structural domains, F(1) containing the extramembraneous catalytic core and F(0) containing the membrane proton channel, linked together by a central stalk and a peripheral stalk. During catalysis, ATP synthesis in the catalytic domain of F(1) is coupled via a rotary mechanism of the central stalk subunits to proton translocation. Component of the F(0) channel, it forms part of the peripheral stalk, linking F(1) to F(0). This chain is ATP synthase subunit b, found in Haemophilus influenzae (strain PittGG).